Consider the following 244-residue polypeptide: High frequency lysogenization protein HflD homolog (244 aa).

Belongs to the HflD family.

It is found in the cytoplasm. The protein localises to the cell inner membrane. This is High frequency lysogenization protein HflD homolog from Acinetobacter baumannii (strain ATCC 17978 / DSM 105126 / CIP 53.77 / LMG 1025 / NCDC KC755 / 5377).